The sequence spans 352 residues: S-adenosylmethionine:tRNA ribosyltransferase-isomerase (352 aa).

The protein belongs to the QueA family. As to quaternary structure, monomer.

The protein localises to the cytoplasm. It catalyses the reaction 7-aminomethyl-7-carbaguanosine(34) in tRNA + S-adenosyl-L-methionine = epoxyqueuosine(34) in tRNA + adenine + L-methionine + 2 H(+). It functions in the pathway tRNA modification; tRNA-queuosine biosynthesis. Functionally, transfers and isomerizes the ribose moiety from AdoMet to the 7-aminomethyl group of 7-deazaguanine (preQ1-tRNA) to give epoxyqueuosine (oQ-tRNA). This Allorhizobium ampelinum (strain ATCC BAA-846 / DSM 112012 / S4) (Agrobacterium vitis (strain S4)) protein is S-adenosylmethionine:tRNA ribosyltransferase-isomerase.